A 258-amino-acid chain; its full sequence is Tryptophan synthase alpha chain (258 aa).

Catalysis depends on proton acceptor residues E47 and D58.

It belongs to the TrpA family. In terms of assembly, tetramer of two alpha and two beta chains.

It catalyses the reaction (1S,2R)-1-C-(indol-3-yl)glycerol 3-phosphate + L-serine = D-glyceraldehyde 3-phosphate + L-tryptophan + H2O. Its pathway is amino-acid biosynthesis; L-tryptophan biosynthesis; L-tryptophan from chorismate: step 5/5. Its function is as follows. The alpha subunit is responsible for the aldol cleavage of indoleglycerol phosphate to indole and glyceraldehyde 3-phosphate. The polypeptide is Tryptophan synthase alpha chain (Bacillus cereus (strain B4264)).